The following is a 220-amino-acid chain: Nucleolar protein 3 (220 aa).

A lipid anchor (N-myristoyl glycine) is attached at glycine 2. The CARD domain occupies 4 to 95 (VQERPSETID…MPDPAWDWQH (92 aa)). The segment at 20-70 (VETLQADSGLLLDALVARGVLTGPEYEALDALPDAERRVRRLLLLVQSKGE) is essential for interaction with BAX. Residues 111 to 220 (GHWTPEAPSS…FQEEDESEDS (110 aa)) are disordered. Threonine 149 is subject to Phosphothreonine; by CK2. Positions 152–220 (EPELEAEATE…FQEEDESEDS (69 aa)) are enriched in acidic residues.

As to quaternary structure, oligomerizes (via CARD doamin). Interacts (via CARD domain) with CASP2; inhibits CASP2 activity in a phosphorylation-dependent manner. Interacts with CASP8; decreases CASP8 activity in a mitochondria localization- and phosphorylation-dependent manner and this interaction is dissociated by calcium. Interacts with TFPT; translocates NOL3 into the nucleus and negatively regulated TFPT-induced cell death. Interacts directly (via CARD domain) with FAS and FADD (via DED domain); inhibits death-inducing signaling complex (DISC) assembly by inhibiting the increase in FAS-FADD binding induced by FAS activation. Interacts (via CARD domain) with BAX (via a C-terminal 33 residues); inhibits BAX activation and translocation and consequently cytochrome c release from mitochondria. Interacts with PPM1G; may dephosphorylate NOL3. Interacts (via CARD domain) with BBC3 (via BH3 domain); preventing the association of BBC3 with BCL2 and resulting in activation of CASP8. Interacts (via CARD domain) with BAD(via BH3 domain); preventing the association of BAD with BCL2. Interacts directly (via CARD domain) with TNFRSF1A; inhibits TNF-signaling pathway. Phosphorylation at Thr-149 is required for its antiapoptotic effect by blocking death-inducing signaling complex death-inducing signaling complex (DISC) activity through the control of interaction with CASP8. Phosphorylation at Thr-149 results in translocation to mitochondria and this translocation enables the binding to CASP8. Dephosphorylated at Thr-149 by calcineurin; doesn't inhibit the association between FADD and CASP8 and the consequent apoptosis. In terms of processing, polyubiquitinated by MDM2; promoting proteasomal-dependent degradation in response to apoptotic stimuli.

The protein resides in the cytoplasm. The protein localises to the mitochondrion. It localises to the sarcoplasmic reticulum. Its subcellular location is the membrane. Its function is as follows. Apoptosis repressor that blocks multiple modes of cell death. Inhibits extrinsic apoptotic pathways through two different ways. Firstly by interacting with FAS and FADD upon FAS activation blocking death-inducing signaling complex (DISC) assembly. Secondly by interacting with CASP8 in a mitochondria localization- and phosphorylation-dependent manner, limiting the amount of soluble CASP8 available for DISC-mediated activation. Inhibits intrinsic apoptotic pathway in response to a wide range of stresses, through its interaction with BAX resulting in BAX inactivation, preventing mitochondrial dysfunction and release of pro-apoptotic factors. Inhibits calcium-mediated cell death by functioning as a cytosolic calcium buffer, dissociating its interaction with CASP8 and maintaining calcium homeostasis. Negatively regulates oxidative stress-induced apoptosis by phosphorylation-dependent suppression of the mitochondria-mediated intrinsic pathway, by blocking CASP2 activation and BAX translocation. Negatively regulates hypoxia-induced apoptosis in part by inhibiting the release of cytochrome c from mitochondria in a caspase-independent manner. Also inhibits TNF-induced necrosis by preventing TNF-signaling pathway through TNFRSF1A interaction abrogating the recruitment of RIPK1 to complex I. Finally through its role as apoptosis repressor, promotes vascular remodeling through inhibition of apoptosis and stimulation of proliferation, in response to hypoxia. Inhibits too myoblast differentiation through caspase inhibition. The chain is Nucleolar protein 3 (Nol3) from Mus musculus (Mouse).